The sequence spans 608 residues: Growth hormone receptor (608 aa).

Residues 1–16 form the signal peptide; it reads MDLRHLLFTLALVCAN. At 17-237 the chain is on the extracellular side; sequence DSLSASDDLL…EFVHCAEEIE (221 aa). 2 disulfides stabilise this stretch: cysteine 34-cysteine 44 and cysteine 72-cysteine 83. N-linked (GlcNAc...) asparagine glycosylation is present at asparagine 86. The cysteines at positions 97 and 111 are disulfide-linked. One can recognise a Fibronectin type-III domain in the interval 122-226; sequence PPVHLNWTLL…ILYVSFTQAG (105 aa). Residues asparagine 127, asparagine 132, and asparagine 171 are each glycosylated (N-linked (GlcNAc...) asparagine). The short motif at 211–215 is the WSXWS motif element; the sequence is FGEFS. The helical transmembrane segment at 238-261 threads the bilayer; that stretch reads FPWFLVVVFGVCGLAVTAILILLS. At 262–608 the chain is on the cytoplasmic side; it reads KQPRLKMLIF…STDQLNKIMP (347 aa). The required for JAK2 binding stretch occupies residues 267–352; it reads KMLIFPPVPV…HLKSHSCLGA (86 aa). The short motif at 270 to 278 is the Box 1 motif element; sequence IFPPVPVPK. Residues 313–322 carry the UbE motif motif; the sequence is DLWVEFIELD. 2 stretches are compositionally biased toward polar residues: residues 413–426 and 438–451; these read ANTDTQQPHTSTQS and STDSANPSVQTQLS. The segment at 413 to 451 is disordered; sequence ANTDTQQPHTSTQSESRESWPPFADSTDSANPSVQTQLS.

This sequence belongs to the type I cytokine receptor family. Type 1 subfamily. Post-translationally, on GH binding, proteolytically cleaved, in vitro, to produce GHBP. Broad specificity.

Its subcellular location is the cell membrane. The protein localises to the secreted. Receptor for pituitary gland growth hormone (GH1) involved in regulating postnatal body growth. On ligand binding, couples to the JAK2/STAT5 pathway. Its function is as follows. The soluble form (GHBP) acts as a reservoir of growth hormone in plasma and may be a modulator/inhibitor of GH signaling. This chain is Growth hormone receptor (GHR), found in Gallus gallus (Chicken).